A 221-amino-acid chain; its full sequence is 7-cyano-7-deazaguanine synthase (221 aa).

10–20 (FSGGQDSTTCL) contributes to the ATP binding site. The Zn(2+) site is built by C186, C195, C198, and C201.

The protein belongs to the QueC family. As to quaternary structure, homodimer. Requires Zn(2+) as cofactor.

It catalyses the reaction 7-carboxy-7-deazaguanine + NH4(+) + ATP = 7-cyano-7-deazaguanine + ADP + phosphate + H2O + H(+). It functions in the pathway purine metabolism; 7-cyano-7-deazaguanine biosynthesis. Functionally, catalyzes the ATP-dependent conversion of 7-carboxy-7-deazaguanine (CDG) to 7-cyano-7-deazaguanine (preQ(0)). This chain is 7-cyano-7-deazaguanine synthase, found in Geobacillus thermodenitrificans (strain NG80-2).